Consider the following 354-residue polypeptide: MADQTNPWDTAQVADTTTQTADAWGTPAGVATDGGSTDWLNSAPAPAPEHFSLLDPFHKTLIPLDSWVTEGIDWVVTHFRPLFQGIRVPVDYILNGFQQLLLGMPAPVAIILFALIAWQVSGVGMGIATLISLIAIGAIGAWSQAMITLALVLTALLFCVVIGLPMGIWLARSPRAAKIVRPLLDAMQTTPAFVYLVPIVMLFGIGNVPGVVVTIIFALPPIVRLTILGINQVPADLIEASRSFGASPRQMLFKVQLPLAMPTIMAGVNQTLMLALSMVVIASMIAVGGLGQMVLRGIGRLDMGLATVGGVGIVILAIILDRLTQAVGRDSRSRGNRRWYTTGPVGLITRPFVK.

The tract at residues 1–28 (MADQTNPWDTAQVADTTTQTADAWGTPA) is disordered. Topologically, residues 1–99 (MADQTNPWDT…VDYILNGFQQ (99 aa)) are cytoplasmic. The span at 9–23 (DTAQVADTTTQTADA) shows a compositional bias: low complexity. The helical transmembrane segment at 100-120 (LLLGMPAPVAIILFALIAWQV) threads the bilayer. Ser-121 is a topological domain (periplasmic). The chain crosses the membrane as a helical span at residues 122 to 142 (GVGMGIATLISLIAIGAIGAW). Residues 143–148 (SQAMIT) lie on the Cytoplasmic side of the membrane. In terms of domain architecture, ABC transmembrane type-1 spans 145–324 (AMITLALVLT…ILAIILDRLT (180 aa)). A helical transmembrane segment spans residues 149–169 (LALVLTALLFCVVIGLPMGIW). Over 170-198 (LARSPRAAKIVRPLLDAMQTTPAFVYLVP) the chain is Periplasmic. Residues 199 to 219 (IVMLFGIGNVPGVVVTIIFAL) form a helical membrane-spanning segment. Residues 220-270 (PPIVRLTILGINQVPADLIEASRSFGASPRQMLFKVQLPLAMPTIMAGVNQ) are Cytoplasmic-facing. Residues 271–291 (TLMLALSMVVIASMIAVGGLG) form a helical membrane-spanning segment. At 292 to 300 (QMVLRGIGR) the chain is on the periplasmic side. A helical membrane pass occupies residues 301–321 (LDMGLATVGGVGIVILAIILD). At 322–354 (RLTQAVGRDSRSRGNRRWYTTGPVGLITRPFVK) the chain is on the cytoplasmic side.

This sequence belongs to the binding-protein-dependent transport system permease family. CysTW subfamily. In terms of assembly, the complex is composed of two ATP-binding proteins (ProV), two transmembrane proteins (ProW) and a solute-binding protein (ProX).

It is found in the cell inner membrane. In terms of biological role, part of the ProU ABC transporter complex involved in glycine betaine and proline betaine uptake. Probably responsible for the translocation of the substrate across the membrane. This Salmonella typhimurium (strain LT2 / SGSC1412 / ATCC 700720) protein is Glycine betaine/proline betaine transport system permease protein ProW.